A 914-amino-acid polypeptide reads, in one-letter code: DNA mismatch repair protein MutS (914 aa).

A disordered region spans residues 28 to 74; it reads NTNSVKDSNLNDEELSKNAELRPRKRKKSVLLQNSVGEQTEDFSNDE. 726–733 serves as a coordination point for ATP; it reads GPNASGKS.

Belongs to the DNA mismatch repair MutS family.

In terms of biological role, this protein is involved in the repair of mismatches in DNA. It is possible that it carries out the mismatch recognition step. This protein has a weak ATPase activity. In Prochlorococcus marinus (strain SARG / CCMP1375 / SS120), this protein is DNA mismatch repair protein MutS.